The following is a 793-amino-acid chain: ATP-dependent RNA helicase DRS1 (793 aa).

Residues 1-208 (MADDFITTID…TTTDPTLPSS (208 aa)) are disordered. The segment covering 75 to 89 (KRGKPIRAFKDRKRK) has biased composition (basic residues). Composition is skewed to acidic residues over residues 94-114 (ATSE…NDDS), 122-144 (SEED…ENEI), and 152-184 (ESDE…EETA). The span at 193–208 (FFSSDPTTTDPTLPSS) shows a compositional bias: low complexity. The short motif at 207-235 (SSFTAMNLSRPLLRALTSLQFTAPTPIQA) is the Q motif element. Positions 238 to 416 (IPLALLGRDI…KLSLDKPIRV (179 aa)) constitute a Helicase ATP-binding domain. 251 to 258 (AVTGSGKT) is a binding site for ATP. The DEAD box motif lies at 364-367 (DEAD). The region spanning 427–606 (GLTQEFVRIR…EFKDDIQEIL (180 aa)) is the Helicase C-terminal domain. Residues 560-630 (EADRKMLKAA…EIKKGQNMVE (71 aa)) are a coiled coil. A disordered region spans residues 645-793 (QSGKEKQASK…KKGGKGKGRK (149 aa)). Composition is skewed to basic and acidic residues over residues 671–688 (SAEK…DGLS) and 726–740 (KITE…AGKG). The span at 741-752 (KDKKKGKARRVT) shows a compositional bias: basic residues. Basic and acidic residues predominate over residues 761-771 (SEGKKSHEGMR). Basic residues predominate over residues 782–793 (GKKKGGKGKGRK).

It belongs to the DEAD box helicase family. DDX27/DRS1 subfamily. Associates with pre-ribosomal particles.

It localises to the nucleus. Its subcellular location is the nucleolus. It carries out the reaction ATP + H2O = ADP + phosphate + H(+). ATP-binding RNA helicase involved in ribosome assembly. The sequence is that of ATP-dependent RNA helicase DRS1 (DRS1) from Cryptococcus neoformans var. neoformans serotype D (strain JEC21 / ATCC MYA-565) (Filobasidiella neoformans).